The primary structure comprises 1038 residues: E3 ubiquitin-protein ligase Topors (1038 aa).

The disordered stretch occupies residues 53-96 (ESGSESGDNEAEEPVSAGPDNANAIGEPGTSASAAEENGTVERN). An RING-type zinc finger spans residues 102 to 141 (CAICLSRCRRKCFTDSCMHQFCFKCLCEWSKIKPECPLCK). Positions 495 to 682 (AAANAEVAAI…SSDSSTTNSE (188 aa)) are interaction with hairy/hry. Disordered regions lie at residues 627–858 (DQLR…SSTA) and 972–1038 (GESE…LLPY). A compositionally biased stretch (basic residues) spans 633 to 642 (RSIRSKKSRR). Positions 643–668 (SSMPARSDSGSSPSSCSSSSFHFSSS) are enriched in low complexity. The segment covering 686–699 (KKSRKRVANNKRSK) has biased composition (basic residues). A compositionally biased stretch (low complexity) spans 723-744 (QQQISQKKPQRQPESSSDSPSS). Over residues 792–801 (ATLEDRKPVK) the composition is skewed to basic and acidic residues. Threonine 820 is subject to Phosphothreonine. A Phosphoserine modification is found at serine 822. Positions 841 to 858 (SHSNQSSQSASLASSSTA) are enriched in low complexity. Acidic residues predominate over residues 987 to 1031 (EEQDEEDEEDEDQEEDDQEEEKAAEEEEEEEEDDDDSDNHDENDE).

As to quaternary structure, interacts with hairy/hry, p53 and Top1. Interacts with the gypsy chromatin insulator complex, composed of Cp190, mod(mdg4) and su(Hw); interacts directly with mod(mdg4) and su(Hw). Interacts with Lam/lamin.

The protein resides in the nucleus. Its subcellular location is the chromosome. The catalysed reaction is S-ubiquitinyl-[E2 ubiquitin-conjugating enzyme]-L-cysteine + [acceptor protein]-L-lysine = [E2 ubiquitin-conjugating enzyme]-L-cysteine + N(6)-ubiquitinyl-[acceptor protein]-L-lysine.. Functions as a ubiquitin-protein E3 ligase. Negatively regulates the transcriptional repressor hairy/hry by promoting its ubiquitination and subsequent degradation. Also directs the nuclear organization of the gypsy chromatin insulator. Chromatin insulators are regulatory elements which establish independent domains of transcriptional activity within eukaryotic genomes. Insulators have two defining properties; they can block the communication between an enhancer and a promoter when placed between them, and can also buffer transgenes from position effect variegation (PEV). Insulators are proposed to structure the chromatin fiber into independent domains of differing transcriptional potential by promoting the formation of distinct chromatin loops. This chromatin looping may require the formation of insulator bodies, where homotypic interactions between individual subunits of the insulator complex could promote the clustering of widely spaced insulators at the nuclear periphery. Within the gypsy insulator complex, this protein may promote formation of nuclear insulator bodies by recruiting individual insulator complexes to the nuclear lamina. In Drosophila melanogaster (Fruit fly), this protein is E3 ubiquitin-protein ligase Topors (Topors).